The following is a 1064-amino-acid chain: WD repeat-containing protein on Y chromosome (1064 aa).

WD repeat units lie at residues 150–194, 317–356, 360–399, 450–489, 502–541, 589–629, 742–781, and 825–864; these read EEVT…IRTA, RIPL…EPSA, GHNG…LLQT, THAA…RKII, IIDI…VVRN, FHTD…RRYS, KTGD…VPAS, and GHLK…LGTL. The tract at residues 1022–1044 is disordered; the sequence is SSLNIKQPTRRRSGKTHDPRNIR.

This is WD repeat-containing protein on Y chromosome from Drosophila ananassae (Fruit fly).